We begin with the raw amino-acid sequence, 1649 residues long: Formin-like protein 20 (1649 aa).

Residues 1-194 (MALFRRFFYK…QYISRRNLGS (194 aa)) enclose the Phosphatase tensin-type domain. Cys-127 (phosphocysteine intermediate) is an active-site residue. Residues 200-339 (DTPLLLDCLI…FKAEVLFSGA (140 aa)) form the C2 tensin-type domain. Disordered stretches follow at residues 416–774 (DCAS…PWKS) and 787–1245 (STSQ…QKKS). Residues 421-483 (DSNHKHDMHA…RRTVEAKEND (63 aa)) are compositionally biased toward basic and acidic residues. 2 stretches are compositionally biased toward polar residues: residues 500–513 (LESM…SLNK) and 585–597 (RINS…TTSL). Basic and acidic residues predominate over residues 598–616 (KDGKRATSPDGVIPKDAKT). Residues 648 to 662 (SLPPASPHQAPPPLP) are compositionally biased toward pro residues. The segment covering 665-678 (TSEAKTVLHSSQAV) has biased composition (polar residues). Composition is skewed to pro residues over residues 680 to 691 (SPPPPPPPPPLP), 701 to 711 (LPPPPPPPPPF), 722 to 732 (LPPPPPPPPPF), 743 to 752 (LPPPPPPPLP), and 795 to 804 (SPTPPPPPPA). Residues 809-820 (GQKSSDLQTSQL) show a composition bias toward polar residues. Composition is skewed to pro residues over residues 821-832 (PSPPPPPPPPPF), 843-854 (LPPPPPPPPPPF), and 865-874 (LPPPPPPPPW). Residues 878–890 (YASTFETHEACST) show a composition bias toward polar residues. 3 stretches are compositionally biased toward pro residues: residues 893-904 (SPPPPPPPPPFS), 944-960 (PSPP…PPPF), and 968-1213 (SPPP…PPPM). In terms of domain architecture, FH2 spans 1237 to 1635 (FGSAAQKKSS…KALKEAEMEK (399 aa)).

This sequence belongs to the formin-like family. Class-II subfamily.

In Arabidopsis thaliana (Mouse-ear cress), this protein is Formin-like protein 20 (FH20).